The chain runs to 694 residues: Lamina-associated polypeptide 2, isoform alpha (694 aa).

The LEM-like domain occupies 5-48 (LEDPSVLTKDKLKSELVANNVTLPAGEQRKDVYVQLYLQHLTAR). Disordered stretches follow at residues 47–117 (ARNR…ELTN) and 150–209 (REQG…FSEL). Residues 49–108 (NRPPLPAGTNSKGPPDFSSDEEREPTPVLGSGAAAAGRSRAAVGRKATKKTDKPRQEDKD) are linker. A Phosphothreonine modification is found at Thr57. Residues Ser59, Ser66, and Ser67 each carry the phosphoserine modification. Position 74 is a phosphothreonine (Thr74). Over residues 78–93 (GSGAAAAGRSRAAVGR) the composition is skewed to low complexity. Residue Ser79 is modified to Phosphoserine. Residues Arg86 and Arg88 each carry the omega-N-methylarginine modification. The segment covering 97-106 (KKTDKPRQED) has biased composition (basic and acidic residues). Acidic residues predominate over residues 107–117 (KDDLDVTELTN). The 45-residue stretch at 109 to 153 (DLDVTELTNEDLLDQLVKYGVNPGPIVGTTRKLYEKKLLKLREQG) folds into the LEM domain. Thr154 carries the post-translational modification Phosphothreonine. Positions 155–178 (ESRSSTPLPTISSSAENTRQNGSN) are enriched in polar residues. 2 positions are modified to phosphoserine: Ser156 and Ser159. Thr160 and Thr164 each carry phosphothreonine. Residues Ser166 and Ser168 each carry the phosphoserine modification. The segment covering 179–191 (DSDRYSDNEEGKK) has biased composition (basic and acidic residues). The short motif at 190–196 (KKKEHKK) is the Nuclear localization signal element. Phosphoserine occurs at positions 272, 312, 351, 354, 370, and 424. Positions 338–368 (QPLCPERSHISDQSPLSSKRKALEESESSQL) are disordered. Residues 558–657 (TESCNQQLDL…VGRRYLWLKD (100 aa)) are a coiled coil. Position 656 is an N6-acetyllysine (Lys656).

The protein belongs to the LEM family. As to quaternary structure, interacts with LMNA, BANF1 and RB1 and with chromosomes. Associates directly or indirectly with lamins at specific cell-cycle stages. Interacts with CMTM6. In terms of processing, phosphorylated in a mitose-specific manner. Expressed in many tissues. Most abundant in adult thymus and fetal liver.

It is found in the nucleus. It localises to the chromosome. May be involved in the structural organization of the nucleus and in the post-mitotic nuclear assembly. Plays an important role, together with LMNA, in the nuclear anchorage of RB1. Its function is as follows. TP and TP5 may play a role in T-cell development and function. TP5 is an immunomodulating pentapeptide. This chain is Lamina-associated polypeptide 2, isoform alpha (TMPO), found in Homo sapiens (Human).